Reading from the N-terminus, the 293-residue chain is Ribosomal protein L11 methyltransferase (293 aa).

Positions 145, 166, 188, and 230 each coordinate S-adenosyl-L-methionine.

It belongs to the methyltransferase superfamily. PrmA family.

The protein localises to the cytoplasm. The catalysed reaction is L-lysyl-[protein] + 3 S-adenosyl-L-methionine = N(6),N(6),N(6)-trimethyl-L-lysyl-[protein] + 3 S-adenosyl-L-homocysteine + 3 H(+). Functionally, methylates ribosomal protein L11. This Salmonella newport (strain SL254) protein is Ribosomal protein L11 methyltransferase.